The following is a 333-amino-acid chain: Fructose-1,6-bisphosphatase class 1 (333 aa).

Residues E92, D113, L115, and D116 each coordinate Mg(2+). Substrate is bound by residues 116–119, N209, Y242, and K272; that span reads DGSS. E278 serves as a coordination point for Mg(2+).

It belongs to the FBPase class 1 family. Homotetramer. It depends on Mg(2+) as a cofactor.

The protein resides in the cytoplasm. It catalyses the reaction beta-D-fructose 1,6-bisphosphate + H2O = beta-D-fructose 6-phosphate + phosphate. It participates in carbohydrate biosynthesis; Calvin cycle. This Chlorobaculum parvum (strain DSM 263 / NCIMB 8327) (Chlorobium vibrioforme subsp. thiosulfatophilum) protein is Fructose-1,6-bisphosphatase class 1.